Consider the following 525-residue polypeptide: GMP synthase [glutamine-hydrolyzing] (525 aa).

A Glutamine amidotransferase type-1 domain is found at 16–205 (PVLVVDFGAQ…LHDFAGIGAR (190 aa)). C93 (nucleophile) is an active-site residue. Active-site residues include H179 and E181. The GMPS ATP-PPase domain maps to 206-399 (WTPANIANAL…LGLPEEIVAR (194 aa)). 233–239 (SGGVDSA) serves as a coordination point for ATP.

Homodimer.

The enzyme catalyses XMP + L-glutamine + ATP + H2O = GMP + L-glutamate + AMP + diphosphate + 2 H(+). Its pathway is purine metabolism; GMP biosynthesis; GMP from XMP (L-Gln route): step 1/1. In terms of biological role, catalyzes the synthesis of GMP from XMP. The protein is GMP synthase [glutamine-hydrolyzing] of Mycobacterium marinum (strain ATCC BAA-535 / M).